The sequence spans 1135 residues: Vinculin (1135 aa).

Residues 2 to 835 (PVFHTRTIES…GAVAKVREAF (834 aa)) are N-terminal globular head. Tyrosine 100 is subject to Phosphotyrosine. A talin-interaction region spans residues 168–208 (MTKMAKMIDERQQELTHQEHRVMLVNSMNTVKELLPVLISA). Repeat copies occupy residues 259 to 369 (ASKD…KVEN), 370 to 479 (AARK…KTNR), and 480 to 589 (AVAN…RMQE). The segment at 259–589 (ASKDTEAMKR…LKDLKARMQE (331 aa)) is 3 X 112 AA tandem repeats. Tyrosine 537 and tyrosine 822 each carry phosphotyrosine. Residues 836–878 (QPQEPDFPPPPPDLEHLHLTDELAPPKPPLPEGEVPPPRPPPP) form a linker (Pro-rich) region. The interval 837-888 (PQEPDFPPPPPDLEHLHLTDELAPPKPPLPEGEVPPPRPPPPEEKDEEFPEQ) is disordered. The segment covering 860-876 (PPKPPLPEGEVPPPRPP) has biased composition (pro residues). Positions 879-1135 (EEKDEEFPEQ…RWVRKTPWYQ (257 aa)) are C-terminal tail. Facilitates phospholipid membrane insertion stretches follow at residues 1004 to 1047 (RLVR…KRIR) and 1121 to 1135 (AGFT…PWYQ). Phosphotyrosine; by SRC-type Tyr-kinases is present on tyrosine 1134.

It belongs to the vinculin/alpha-catenin family. Exhibits self-association properties. Interacts with APBB1IP, NRAP and TLN1. Interacts with CTNNB1 and this interaction is necessary for its localization to the cell-cell junctions and for its function in regulating cell surface expression of E-cadherin. In terms of processing, phosphorylated; on serines, threonines and tyrosines. Phosphorylation on Tyr-1134 in activated platelets affects head-tail interactions and cell spreading but has no effect on actin binding nor on localization to focal adhesion plaques. Post-translationally, acetylated; mainly by myristic acid but also by a small amount of palmitic acid. As to expression, isoform Metavinculin is muscle-specific.

It is found in the cell membrane. The protein resides in the cell junction. Its subcellular location is the adherens junction. It localises to the focal adhesion. The protein localises to the cytoplasm. It is found in the cytoskeleton. The protein resides in the sarcolemma. Its subcellular location is the cell projection. It localises to the podosome. Functionally, actin filament (F-actin)-binding protein involved in cell-matrix adhesion and cell-cell adhesion. Regulates cell-surface E-cadherin expression and potentiates mechanosensing by the E-cadherin complex. May also play important roles in cell morphology and locomotion. This chain is Vinculin (VCL), found in Gallus gallus (Chicken).